The following is a 288-amino-acid chain: Nucleotide-binding protein PM0169 (288 aa).

ATP is bound at residue 8–15 (GHSGAGKS). 56 to 59 (DIRN) is a binding site for GTP.

Belongs to the RapZ-like family.

Functionally, displays ATPase and GTPase activities. The polypeptide is Nucleotide-binding protein PM0169 (Pasteurella multocida (strain Pm70)).